A 151-amino-acid polypeptide reads, in one-letter code: UPF0756 membrane protein Lreu_0946 (151 aa).

Helical transmembrane passes span 4–24 (WLFL…SLII), 52–72 (WGVT…QIGF), 77–97 (AAFK…VAIL), and 115–135 (LVLG…GPVI).

The protein belongs to the UPF0756 family.

It localises to the cell membrane. The sequence is that of UPF0756 membrane protein Lreu_0946 from Limosilactobacillus reuteri (strain DSM 20016) (Lactobacillus reuteri).